We begin with the raw amino-acid sequence, 297 residues long: Vacuolar protein sorting-associated protein 26C (297 aa).

It belongs to the VPS26 family. As to quaternary structure, component of the commander complex that is essential for endosomal recycling of transmembrane cargos; the commander complex is composed of the CCC subcomplex and the retriever subcomplex. Component of the heterotrimeric retriever complex consisting of VPS26C, VPS29 and VPS35L; within the complex interacts with VPS35L. Interacts with SNX17 (via C-terminus); the interaction is direct and associates SNX17 with the retriever complex. Interacts with SNX31; the interaction is direct. As to expression, ubiquitously expressed.

The protein localises to the endosome. Functionally, component of the commander complex that is essential for endosomal recycling of transmembrane cargos; the commander complex is composed of the CCC subcomplex and the retriever subcomplex. Component of the retriever complex, which is a heterotrimeric complex related to retromer cargo-selective complex (CSC) and essential for retromer-independent retrieval and recycling of numerous cargos such as integrin alpha-5/beta-1 (ITGA5:ITGB1). The recruitment of the retriever complex to the endosomal membrane involves CCC and WASH complexes. In the endosomes, drives the retriever and recycling of NxxY-motif-containing cargo proteins by coupling to SNX17, a cargo essential for the homeostatic maintenance of numerous cell surface proteins associated with processes that include cell migration, cell adhesion, nutrient supply and cell signaling. Its function is as follows. (Microbial infection) The heterotrimeric retriever complex, in collaboration with the CCC complex, mediates the exit of human papillomavirus to the cell surface. In Homo sapiens (Human), this protein is Vacuolar protein sorting-associated protein 26C.